A 535-amino-acid polypeptide reads, in one-letter code: CTP synthase (535 aa).

The amidoligase domain stretch occupies residues 1–267; that stretch reads MTKYIFVTGG…DKLVCEHMKL (267 aa). Position 13 (serine 13) interacts with CTP. Serine 13 contributes to the UTP binding site. 14–19 is an ATP binding site; sequence SLGKGI. Tyrosine 54 lines the L-glutamine pocket. Position 71 (aspartate 71) interacts with ATP. Positions 71 and 141 each coordinate Mg(2+). CTP-binding positions include 148-150, 188-193, and lysine 224; these read DIE and KTKPTQ. Residues 188 to 193 and lysine 224 each bind UTP; that span reads KTKPTQ. Residues 292 to 534 form the Glutamine amidotransferase type-1 domain; sequence TIGLVGKYVE…VGASLQASES (243 aa). Residue glycine 354 participates in L-glutamine binding. The active-site Nucleophile; for glutamine hydrolysis is cysteine 381. L-glutamine contacts are provided by residues 382 to 385, glutamate 405, and arginine 462; that span reads LGMQ. Residues histidine 507 and glutamate 509 contribute to the active site.

It belongs to the CTP synthase family. Homotetramer.

It catalyses the reaction UTP + L-glutamine + ATP + H2O = CTP + L-glutamate + ADP + phosphate + 2 H(+). It carries out the reaction L-glutamine + H2O = L-glutamate + NH4(+). The enzyme catalyses UTP + NH4(+) + ATP = CTP + ADP + phosphate + 2 H(+). Its pathway is pyrimidine metabolism; CTP biosynthesis via de novo pathway; CTP from UDP: step 2/2. Allosterically activated by GTP, when glutamine is the substrate; GTP has no effect on the reaction when ammonia is the substrate. The allosteric effector GTP functions by stabilizing the protein conformation that binds the tetrahedral intermediate(s) formed during glutamine hydrolysis. Inhibited by the product CTP, via allosteric rather than competitive inhibition. In terms of biological role, catalyzes the ATP-dependent amination of UTP to CTP with either L-glutamine or ammonia as the source of nitrogen. Regulates intracellular CTP levels through interactions with the four ribonucleotide triphosphates. The protein is CTP synthase of Bacillus pumilus (strain SAFR-032).